The sequence spans 279 residues: Probable endonuclease 4 (279 aa).

9 residues coordinate Zn(2+): His-74, His-112, Glu-147, Asp-180, His-183, His-214, Asp-227, His-229, and Glu-259.

The protein belongs to the AP endonuclease 2 family. Requires Zn(2+) as cofactor.

It carries out the reaction Endonucleolytic cleavage to 5'-phosphooligonucleotide end-products.. Endonuclease IV plays a role in DNA repair. It cleaves phosphodiester bonds at apurinic or apyrimidinic (AP) sites, generating a 3'-hydroxyl group and a 5'-terminal sugar phosphate. This is Probable endonuclease 4 from Mycoplasma mobile (strain ATCC 43663 / 163K / NCTC 11711) (Mesomycoplasma mobile).